We begin with the raw amino-acid sequence, 507 residues long: MRLNPGEIVRVLETKISDYKEEIRLEDTGKVIQVGDGIARVYGLNNVMANEMVEFVETGTKGLAFNLEEDNVGIIILGDYKDIKEGHTVRRLNRIMEVPVGEGLLGRVVNPLGEPLDGLGPVEYKETRPIEFKAPGVIFRKPVDTPLQTGLKVVDSLIPIGRGQRELIIGDRQTGKTAIAIDTIINQKGKGVYCIYVAIGQKASAVARIVEKLRQTGAMEYTTVVVAASSDPATLQYIAPYAGCAMGEYFMFNGKDALVVYDDLSKHAVAYRQISLLLRRPPGREAYPGDVFYLHSRLLERAARLNEKYGGGSLTALPIIETQANDISAYIPTNVISITDGQIYLEPGLFYAGQRPAVNIGLSVSRVGGAAQIKAMKQVAGSLKLDLAQFQELETFAQFATELDPATQAQITRGQRLMELMKQPQYSPMEVEDQVVVLFAGINGYLDDLPINAVKAFEEGLLKFVKEKYSSLLDEIRTTKQLSKENETKLHAVIKEFKEEFVKLYGK.

170–177 (GDRQTGKT) serves as a coordination point for ATP.

Belongs to the ATPase alpha/beta chains family. As to quaternary structure, F-type ATPases have 2 components, CF(1) - the catalytic core - and CF(0) - the membrane proton channel. CF(1) has five subunits: alpha(3), beta(3), gamma(1), delta(1), epsilon(1). CF(0) has three main subunits: a(1), b(2) and c(9-12). The alpha and beta chains form an alternating ring which encloses part of the gamma chain. CF(1) is attached to CF(0) by a central stalk formed by the gamma and epsilon chains, while a peripheral stalk is formed by the delta and b chains.

The protein resides in the cell inner membrane. The catalysed reaction is ATP + H2O + 4 H(+)(in) = ADP + phosphate + 5 H(+)(out). Produces ATP from ADP in the presence of a proton gradient across the membrane. The alpha chain is a regulatory subunit. In Fervidobacterium nodosum (strain ATCC 35602 / DSM 5306 / Rt17-B1), this protein is ATP synthase subunit alpha.